Here is an 86-residue protein sequence, read N- to C-terminus: Omega-theraphotoxin-Hhn1f 3 (86 aa).

Positions 1–21 (MKSIVFVALFGLALLAVACSA) are cleaved as a signal peptide. Residues 22–50 (SEDAHKELLKEVVRAMVVDKTDAVQAEER) constitute a propeptide that is removed on maturation. Disulfide bonds link Cys52/Cys66, Cys59/Cys71, and Cys65/Cys78.

The protein belongs to the neurotoxin 10 (Hwtx-1) family. 17 (Hntx-9) subfamily. As to expression, expressed by the venom gland.

The protein resides in the secreted. In terms of biological role, ion channel inhibitor. The protein is Omega-theraphotoxin-Hhn1f 3 of Cyriopagopus hainanus (Chinese bird spider).